Consider the following 65-residue polypeptide: Putative beta-neurotoxin RjAa2 (65 aa).

Positions Lys1 to Gly64 constitute an LCN-type CS-alpha/beta domain. 4 cysteine pairs are disulfide-bonded: Cys11–Cys63, Cys15–Cys37, Cys22–Cys44, and Cys26–Cys46.

The protein belongs to the long (4 C-C) scorpion toxin superfamily. Sodium channel inhibitor family. Beta subfamily. In terms of tissue distribution, expressed by the venom gland.

The protein resides in the secreted. Its function is as follows. Beta toxins bind voltage-independently at site-4 of sodium channels (Nav) and shift the voltage of activation toward more negative potentials thereby affecting sodium channel activation and promoting spontaneous and repetitive firing. The protein is Putative beta-neurotoxin RjAa2 of Rhopalurus junceus (Caribbean blue scorpion).